Consider the following 102-residue polypeptide: MNHQPPPVSRIGWDDQKIMRTRRELDSVKAIMKENVQKIMERQGKLDDLVERAQRLEEASDVYVKCAVKIKREMSWKANSLRYGIIAVSSVSAFAGLAYSFL.

A v-SNARE coiled-coil homology domain is found at 17-77; the sequence is KIMRTRRELD…VKIKREMSWK (61 aa).

The polypeptide is Synaptobrevin-like protein 5 (snb-5) (Caenorhabditis elegans).